Reading from the N-terminus, the 378-residue chain is Bifunctional enzyme IspD/IspF (378 aa).

The tract at residues 1–222 is 2-C-methyl-D-erythritol 4-phosphate cytidylyltransferase; the sequence is MTETVAIIVA…RLLSPTGAPR (222 aa). Residues 222–378 are 2-C-methyl-D-erythritol 2,4-cyclodiphosphate synthase; sequence RIGKGYDVHE…EAVALLMPKG (157 aa). Residues Asp-228 and His-230 each coordinate a divalent metal cation. 4-CDP-2-C-methyl-D-erythritol 2-phosphate is bound by residues 228–230 and 254–255; these read DVH and HS. His-262 contacts a divalent metal cation. 4-CDP-2-C-methyl-D-erythritol 2-phosphate contacts are provided by residues 276-278, 352-355, Phe-359, and Arg-362; these read DIG and TTTE.

This sequence in the N-terminal section; belongs to the IspD/TarI cytidylyltransferase family. IspD subfamily. In the C-terminal section; belongs to the IspF family. It depends on a divalent metal cation as a cofactor.

The catalysed reaction is 2-C-methyl-D-erythritol 4-phosphate + CTP + H(+) = 4-CDP-2-C-methyl-D-erythritol + diphosphate. The enzyme catalyses 4-CDP-2-C-methyl-D-erythritol 2-phosphate = 2-C-methyl-D-erythritol 2,4-cyclic diphosphate + CMP. It functions in the pathway isoprenoid biosynthesis; isopentenyl diphosphate biosynthesis via DXP pathway; isopentenyl diphosphate from 1-deoxy-D-xylulose 5-phosphate: step 2/6. It participates in isoprenoid biosynthesis; isopentenyl diphosphate biosynthesis via DXP pathway; isopentenyl diphosphate from 1-deoxy-D-xylulose 5-phosphate: step 4/6. In terms of biological role, bifunctional enzyme that catalyzes the formation of 4-diphosphocytidyl-2-C-methyl-D-erythritol from CTP and 2-C-methyl-D-erythritol 4-phosphate (MEP) (IspD), and catalyzes the conversion of 4-diphosphocytidyl-2-C-methyl-D-erythritol 2-phosphate (CDP-ME2P) to 2-C-methyl-D-erythritol 2,4-cyclodiphosphate (ME-CPP) with a corresponding release of cytidine 5-monophosphate (CMP) (IspF). In Hyphomonas neptunium (strain ATCC 15444), this protein is Bifunctional enzyme IspD/IspF.